Reading from the N-terminus, the 413-residue chain is Short-chain specific acyl-CoA dehydrogenase, mitochondrial (413 aa).

A mitochondrion-targeting transit peptide spans 1–24 (MAAALLARACGPVRGALWPRDCRR). Thr-27 is modified (phosphothreonine). An N6-acetyllysine; alternate modification is found at Lys-51. Lys-51 is modified (N6-succinyllysine; alternate). Lys-72 is subject to N6-acetyllysine. Lys-129 bears the N6-acetyllysine; alternate mark. Residue Lys-129 is modified to N6-succinyllysine; alternate. Residues 152–161 (FALSEPGNGS) and 185–187 (WIT) each bind FAD. Ser-161 contributes to the substrate binding site. Residue Lys-208 is modified to N6-acetyllysine. An N6-acetyllysine; alternate modification is found at Lys-262. N6-succinyllysine; alternate is present on Lys-262. 269 to 272 (DMGR) serves as a coordination point for substrate. An FAD-binding site is contributed by Arg-297. An N6-acetyllysine; alternate modification is found at Lys-306. At Lys-306 the chain carries N6-succinyllysine; alternate. FAD contacts are provided by residues Gln-308 and 366-370 (QILGG). Glu-393 acts as the Proton acceptor in catalysis. Gly-394 provides a ligand contact to substrate. 395 to 397 (TSE) contacts FAD.

This sequence belongs to the acyl-CoA dehydrogenase family. As to quaternary structure, homotetramer. Requires FAD as cofactor.

The protein localises to the mitochondrion matrix. It carries out the reaction a short-chain 2,3-saturated fatty acyl-CoA + oxidized [electron-transfer flavoprotein] + H(+) = a short-chain (2E)-enoyl-CoA + reduced [electron-transfer flavoprotein]. The enzyme catalyses butanoyl-CoA + oxidized [electron-transfer flavoprotein] + H(+) = (2E)-butenoyl-CoA + reduced [electron-transfer flavoprotein]. It catalyses the reaction pentanoyl-CoA + oxidized [electron-transfer flavoprotein] + H(+) = (2E)-pentenoyl-CoA + reduced [electron-transfer flavoprotein]. The catalysed reaction is hexanoyl-CoA + oxidized [electron-transfer flavoprotein] + H(+) = (2E)-hexenoyl-CoA + reduced [electron-transfer flavoprotein]. It functions in the pathway lipid metabolism; mitochondrial fatty acid beta-oxidation. In terms of biological role, short-chain specific acyl-CoA dehydrogenase is one of the acyl-CoA dehydrogenases that catalyze the first step of mitochondrial fatty acid beta-oxidation, an aerobic process breaking down fatty acids into acetyl-CoA and allowing the production of energy from fats. The first step of fatty acid beta-oxidation consists in the removal of one hydrogen from C-2 and C-3 of the straight-chain fatty acyl-CoA thioester, resulting in the formation of trans-2-enoyl-CoA. Among the different mitochondrial acyl-CoA dehydrogenases, short-chain specific acyl-CoA dehydrogenase acts specifically on acyl-CoAs with saturated 4 to 6 carbons long primary chains. This is Short-chain specific acyl-CoA dehydrogenase, mitochondrial (ACADS) from Sus scrofa (Pig).